We begin with the raw amino-acid sequence, 548 residues long: Probable 2,3-bisphosphoglycerate-independent phosphoglycerate mutase (548 aa).

The Mn(2+) site is built by aspartate 20 and serine 73. The active-site Phosphoserine intermediate is serine 73. Substrate-binding positions include histidine 134, 164-165, arginine 200, arginine 207, 279-282, and lysine 354; these read RD and RGDR. Positions 422, 426, 463, 464, and 493 each coordinate Mn(2+).

Belongs to the BPG-independent phosphoglycerate mutase family. Monomer. Mn(2+) serves as cofactor.

The catalysed reaction is (2R)-2-phosphoglycerate = (2R)-3-phosphoglycerate. It functions in the pathway carbohydrate degradation; glycolysis; pyruvate from D-glyceraldehyde 3-phosphate: step 3/5. Functionally, catalyzes the interconversion of 2-phosphoglycerate and 3-phosphoglycerate. This Leptospira interrogans serogroup Icterohaemorrhagiae serovar Lai (strain 56601) protein is Probable 2,3-bisphosphoglycerate-independent phosphoglycerate mutase (gpmI).